The following is a 552-amino-acid chain: MEKVQQTIRAPRGTELQTKGWVQEAALRMLMNNLDPEVAEKPEELVVYGGIGRAARNWESYQAIVDSLKTLESDETLLVQSGKPVAIFKSHEDAPRVLLANSNLVPKWANWDHFRELEKKGLMMYGQMTAGSWIYIGTQGILQGTYETFGEAARQHFGGSLKGTLTLTAGLGGMGGAQPLAVTMNGGVVIAIDVDKRSIDRRIEKRYCDMYTESLEEALAVANEYKEKKEPISIGLLGNAAEILPELVKRNITPDLVTDQTSAHDPLNGYIPVGYTLEEAAKLREEDPERYVQLSKESMTKHVEAMLAMQEKGAITFDYGNNIRQVAFDEGLKNAFDFPGFVPAFIRPLFCEGKGPFRWVALSGDPEDIYKTDEVILREFADNEHLCNWIRMARQQVEFQGLPSRICWLGYGERAKFGRIINEMVANGELSAPIVIGRDHLDCGSVASPNRETEAMKDGSDAVADWPILNALINSVNGASWVSVHHGGGVGMGYSLHAGMVIVADGTEAAAKRIERVLTSDPGMGVVRHVDAGYDLAVETAKEKGVNIPMMK.

NAD(+) contacts are provided by residues G49 to G50, Q127, G173 to G175, D193, N239 to A240, Q260 to H264, Y270 to I271, and Y319. The active site involves C407. Residue G489 coordinates NAD(+).

This sequence belongs to the urocanase family. NAD(+) is required as a cofactor.

It is found in the cytoplasm. It catalyses the reaction 4-imidazolone-5-propanoate = trans-urocanate + H2O. Its pathway is amino-acid degradation; L-histidine degradation into L-glutamate; N-formimidoyl-L-glutamate from L-histidine: step 2/3. Functionally, catalyzes the conversion of urocanate to 4-imidazolone-5-propionate. This Bacillus thuringiensis (strain Al Hakam) protein is Urocanate hydratase.